The chain runs to 409 residues: Tryptophan synthase beta chain 1 (409 aa).

K104 bears the N6-(pyridoxal phosphate)lysine mark.

It belongs to the TrpB family. In terms of assembly, tetramer of two alpha and two beta chains. It depends on pyridoxal 5'-phosphate as a cofactor.

The enzyme catalyses (1S,2R)-1-C-(indol-3-yl)glycerol 3-phosphate + L-serine = D-glyceraldehyde 3-phosphate + L-tryptophan + H2O. The protein operates within amino-acid biosynthesis; L-tryptophan biosynthesis; L-tryptophan from chorismate: step 5/5. Its function is as follows. The beta subunit is responsible for the synthesis of L-tryptophan from indole and L-serine. The sequence is that of Tryptophan synthase beta chain 1 (trpB1) from Nostoc sp. (strain PCC 7120 / SAG 25.82 / UTEX 2576).